A 183-amino-acid chain; its full sequence is Protein Syd (183 aa).

It belongs to the Syd family.

Its subcellular location is the cell inner membrane. In terms of biological role, interacts with the SecY protein in vivo. May bind preferentially to an uncomplexed state of SecY, thus functioning either as a chelating agent for excess SecY in the cell or as a regulatory factor that negatively controls the translocase function. The protein is Protein Syd of Yersinia pseudotuberculosis serotype O:1b (strain IP 31758).